We begin with the raw amino-acid sequence, 292 residues long: Inositol monophosphatase 2 (292 aa).

Mg(2+)-binding residues include E75, D94, I96, D97, and D231. E75 lines the substrate pocket. Residues 96 to 99 (IDGT) and D231 contribute to the substrate site.

Belongs to the inositol monophosphatase superfamily. Mg(2+) is required as a cofactor.

The enzyme catalyses a myo-inositol phosphate + H2O = myo-inositol + phosphate. The protein operates within polyol metabolism; myo-inositol biosynthesis; myo-inositol from D-glucose 6-phosphate: step 2/2. Inhibited by Li(+) and Na(+). Its function is as follows. Responsible for the provision of inositol required for synthesis of phosphatidylinositol and polyphosphoinositides and involved in the inositol cycle of calcium signaling. The sequence is that of Inositol monophosphatase 2 (INM2) from Saccharomyces cerevisiae (strain ATCC 204508 / S288c) (Baker's yeast).